Here is a 500-residue protein sequence, read N- to C-terminus: Arabinofuranosidase/B-xylosidase (500 aa).

Positions 1–21 (MLSNARIIAAGCIAAGSLVAA) are cleaved as a signal peptide. Asn-467 carries N-linked (GlcNAc...) asparagine glycosylation.

This sequence belongs to the glycosyl hydrolase 54 family.

It catalyses the reaction Hydrolysis of terminal non-reducing alpha-L-arabinofuranoside residues in alpha-L-arabinosides.. The enzyme catalyses Hydrolysis of (1-&gt;4)-beta-D-xylans, to remove successive D-xylose residues from the non-reducing termini.. This chain is Arabinofuranosidase/B-xylosidase (xyl1), found in Trichoderma koningii (Hypocrea koningii).